We begin with the raw amino-acid sequence, 346 residues long: Holliday junction branch migration complex subunit RuvB (346 aa).

The large ATPase domain (RuvB-L) stretch occupies residues 1–182 (MSEAARLIAP…FGIPVRLNFY (182 aa)). Residues Arg-22, Gly-63, Lys-66, Thr-67, Thr-68, 129–131 (EDF), Arg-172, Tyr-182, and Arg-219 contribute to the ATP site. Thr-67 provides a ligand contact to Mg(2+). A small ATPAse domain (RuvB-S) region spans residues 183–253 (TVEELELIVR…IADEALTRLL (71 aa)). The head domain (RuvB-H) stretch occupies residues 256–346 (SMGLDQLDRR…SQFRLTLEDD (91 aa)). Residues Arg-292, Arg-311, and Arg-316 each contribute to the DNA site.

The protein belongs to the RuvB family. As to quaternary structure, homohexamer. Forms an RuvA(8)-RuvB(12)-Holliday junction (HJ) complex. HJ DNA is sandwiched between 2 RuvA tetramers; dsDNA enters through RuvA and exits via RuvB. An RuvB hexamer assembles on each DNA strand where it exits the tetramer. Each RuvB hexamer is contacted by two RuvA subunits (via domain III) on 2 adjacent RuvB subunits; this complex drives branch migration. In the full resolvosome a probable DNA-RuvA(4)-RuvB(12)-RuvC(2) complex forms which resolves the HJ.

It localises to the cytoplasm. It catalyses the reaction ATP + H2O = ADP + phosphate + H(+). In terms of biological role, the RuvA-RuvB-RuvC complex processes Holliday junction (HJ) DNA during genetic recombination and DNA repair, while the RuvA-RuvB complex plays an important role in the rescue of blocked DNA replication forks via replication fork reversal (RFR). RuvA specifically binds to HJ cruciform DNA, conferring on it an open structure. The RuvB hexamer acts as an ATP-dependent pump, pulling dsDNA into and through the RuvAB complex. RuvB forms 2 homohexamers on either side of HJ DNA bound by 1 or 2 RuvA tetramers; 4 subunits per hexamer contact DNA at a time. Coordinated motions by a converter formed by DNA-disengaged RuvB subunits stimulates ATP hydrolysis and nucleotide exchange. Immobilization of the converter enables RuvB to convert the ATP-contained energy into a lever motion, pulling 2 nucleotides of DNA out of the RuvA tetramer per ATP hydrolyzed, thus driving DNA branch migration. The RuvB motors rotate together with the DNA substrate, which together with the progressing nucleotide cycle form the mechanistic basis for DNA recombination by continuous HJ branch migration. Branch migration allows RuvC to scan DNA until it finds its consensus sequence, where it cleaves and resolves cruciform DNA. This is Holliday junction branch migration complex subunit RuvB from Rhizobium meliloti (strain 1021) (Ensifer meliloti).